A 171-amino-acid polypeptide reads, in one-letter code: Mitochondrial import inner membrane translocase subunit Tim17-A (171 aa).

The cysteines at positions 9 and 78 are disulfide-linked. 3 consecutive transmembrane segments (helical) span residues 17–37 (CGGA…FKGF), 63–77 (GGSF…STID), and 113–133 (VGSA…GILL). Positions 147–171 (FAEDHSQLPSSQLPSSPFGDYRQYQ) are disordered. Low complexity predominate over residues 153–163 (QLPSSQLPSSP).

The protein belongs to the Tim17/Tim22/Tim23 family. Component of the TIM23 complex at least composed of TIMM23, TIMM17 (TIMM17A or TIMM17B) and TIMM50. The complex interacts with the TIMM44 component of the PAM complex and with DNAJC15. Post-translationally, degraded by YMEL1 downstream of the integrated stress response (ISR).

The protein resides in the mitochondrion inner membrane. Its function is as follows. Essential component of the TIM23 complex, a complex that mediates the translocation of transit peptide-containing proteins across the mitochondrial inner membrane. This Rattus norvegicus (Rat) protein is Mitochondrial import inner membrane translocase subunit Tim17-A (Timm17a).